A 1167-amino-acid polypeptide reads, in one-letter code: DNA-directed RNA polymerase subunit beta (1167 aa).

Belongs to the RNA polymerase beta chain family. In terms of assembly, the RNAP catalytic core consists of 2 alpha, 1 beta, 1 beta' and 1 omega subunit. When a sigma factor is associated with the core the holoenzyme is formed, which can initiate transcription.

The catalysed reaction is RNA(n) + a ribonucleoside 5'-triphosphate = RNA(n+1) + diphosphate. Its function is as follows. DNA-dependent RNA polymerase catalyzes the transcription of DNA into RNA using the four ribonucleoside triphosphates as substrates. The sequence is that of DNA-directed RNA polymerase subunit beta from Treponema denticola (strain ATCC 35405 / DSM 14222 / CIP 103919 / JCM 8153 / KCTC 15104).